Here is a 356-residue protein sequence, read N- to C-terminus: Protein MGF 360-10L (356 aa).

One copy of the ANK repeat lies at D57–I89. A glycan (N-linked (GlcNAc...) asparagine; by host) is linked at N172. A helical transmembrane segment spans residues N249–I271. N-linked (GlcNAc...) asparagine; by host glycosylation is found at N352 and N353.

Belongs to the asfivirus MGF 360 family.

The protein localises to the host membrane. Its function is as follows. Plays a role in virus cell tropism, and may be required for efficient virus replication in macrophages. In African swine fever virus (isolate Tick/South Africa/Pretoriuskop Pr4/1996) (ASFV), this protein is Protein MGF 360-10L.